The sequence spans 399 residues: Nicotinate phosphoribosyltransferase (399 aa).

Position 224 is a phosphohistidine; by autocatalysis (His-224).

This sequence belongs to the NAPRTase family. Post-translationally, transiently phosphorylated on a His residue during the reaction cycle. Phosphorylation strongly increases the affinity for substrates and increases the rate of nicotinate D-ribonucleotide production. Dephosphorylation regenerates the low-affinity form of the enzyme, leading to product release.

The catalysed reaction is nicotinate + 5-phospho-alpha-D-ribose 1-diphosphate + ATP + H2O = nicotinate beta-D-ribonucleotide + ADP + phosphate + diphosphate. Its pathway is cofactor biosynthesis; NAD(+) biosynthesis; nicotinate D-ribonucleotide from nicotinate: step 1/1. Catalyzes the synthesis of beta-nicotinate D-ribonucleotide from nicotinate and 5-phospho-D-ribose 1-phosphate at the expense of ATP. This is Nicotinate phosphoribosyltransferase from Ectopseudomonas mendocina (strain ymp) (Pseudomonas mendocina).